The sequence spans 328 residues: RING finger protein 175 (328 aa).

The next 5 helical transmembrane spans lie at 51–71 (MHVEMILIFLCVLVIAQIVLV), 83–103 (LVTLLQMWVVPLYFTIKLYWW), 104–121 (RFLSMWGMFSVITSYILF), 149–169 (AFGVVGYLAIMFTMCGFNLFF), and 180–200 (GIVSLFYGLYYGVMGRDFAEI). The RING-type; atypical zinc-finger motif lies at 227–277 (CAVCGQKIIVELDEEGLIENTYQLSCNHVFHEFCIRGWCIVGKKQTCPYCK).

It localises to the membrane. This is RING finger protein 175 (RNF175) from Homo sapiens (Human).